We begin with the raw amino-acid sequence, 990 residues long: Chondroitin sulfate ABC exolyase (990 aa).

The Proton acceptor role is filled by histidine 453. Catalysis depends on tyrosine 460, which acts as the Proton donor.

This sequence belongs to the polysaccharide lyase 8 family.

It catalyses the reaction Exolytic removal of Delta(4)-unsaturated disaccharide residues from the non-reducing ends of both polymeric chondroitin/dermatan sulfates and their oligosaccharide fragments.. With respect to regulation, inhibited by Zn(2+), whereas Ni(2+), Fe(2+), and Cu(2+) have little or no effect on activity. Functionally, broad-specificity glycosaminoglycan lyase, which acts in an exolytic fashion, and preferentially degrades the tetra- and hexasaccharide derivatives of chondroitin sulfate and dermatan sulfate produced by the chondroitin sulfate ABC endolyase, to yield the respective disaccharides. To a lesser extent, is also able to split off disaccharide residues directly from polymeric chondroitin 4- and 6-sulfate, dermatan sulfate, chondroitin, and hyaluronan. Is not active against keratan sulfate, heparan sulfate, and heparin. This is Chondroitin sulfate ABC exolyase (ChABCII) from Proteus vulgaris.